The chain runs to 126 residues: Desulfoferrodoxin (126 aa).

Cys-10, Cys-13, Cys-29, Cys-30, His-49, His-69, His-75, Cys-116, and His-119 together coordinate Fe cation.

This sequence belongs to the desulfoferrodoxin family. As to quaternary structure, homodimer. Requires Fe(3+) as cofactor. It depends on Cu(2+) as a cofactor.

The enzyme catalyses reduced [rubredoxin] + superoxide + 2 H(+) = oxidized [rubredoxin] + H2O2. Functionally, catalyzes the one-electron reduction of superoxide anion radical to hydrogen peroxide at a nonheme ferrous iron center. Plays a fundamental role in case of oxidative stress via its superoxide detoxification activity. In Syntrophotalea carbinolica (strain DSM 2380 / NBRC 103641 / GraBd1) (Pelobacter carbinolicus), this protein is Desulfoferrodoxin (dfx).